The following is a 466-amino-acid chain: Asparagine--tRNA ligase (466 aa).

The protein belongs to the class-II aminoacyl-tRNA synthetase family. In terms of assembly, homodimer.

It is found in the cytoplasm. It carries out the reaction tRNA(Asn) + L-asparagine + ATP = L-asparaginyl-tRNA(Asn) + AMP + diphosphate + H(+). This Myxococcus xanthus (strain DK1622) protein is Asparagine--tRNA ligase.